We begin with the raw amino-acid sequence, 358 residues long: Mitogen-activated protein kinase hog-1 (358 aa).

The region spanning 20–299 (YSDLQPVGMG…ATEALSHEYL (280 aa)) is the Protein kinase domain. Residues 26 to 34 (VGMGAFGLV) and Lys-49 each bind ATP. The active-site Proton acceptor is the Asp-141. Thr-171 bears the Phosphothreonine mark. The TXY motif lies at 171–173 (TGY). The residue at position 173 (Tyr-173) is a Phosphotyrosine.

This sequence belongs to the protein kinase superfamily. Ser/Thr protein kinase family. MAP kinase subfamily. HOG1 sub-subfamily. Mg(2+) serves as cofactor. Post-translationally, dually phosphorylated on Thr-171 and Tyr-173, which activates the enzyme. Phosphorylation is induced by fungicides and osmotic stress.

It is found in the cytoplasm. The protein localises to the nucleus. The enzyme catalyses L-seryl-[protein] + ATP = O-phospho-L-seryl-[protein] + ADP + H(+). It carries out the reaction L-threonyl-[protein] + ATP = O-phospho-L-threonyl-[protein] + ADP + H(+). Its activity is regulated as follows. Activated by tyrosine and threonine phosphorylation. Its function is as follows. Proline-directed serine/threonine-protein kinase involved in a signal transduction pathway that is activated by changes in the osmolarity of the extracellular environment. Controls osmotic regulation of transcription of target genes. Involved in ion flux-mediated turgor regulation. The polypeptide is Mitogen-activated protein kinase hog-1 (hog-1) (Neurospora crassa (strain ATCC 24698 / 74-OR23-1A / CBS 708.71 / DSM 1257 / FGSC 987)).